Consider the following 421-residue polypeptide: MSNDKGLEEIPEDQSTTPHKPTSNVGSRLTRLFQSTGQIETNYDEITDSFDAMELKPELLRGVYAYGFERPSAIQQRAIKPIIKGSDVIAQAQSGTGKTATFSISALQKLDPNVKGCQALILAPTRELAQQIQKVVVAIGDFMNITCHACIGGTAVREDMKALGEGPEVVVGTPGRVHDMIQRRVLKTDHLKQFILDEADEMLSRGFTEQIYDIFQLLPQSTQVVLLSATMPQDVLEVTTKFMRDPVRILVKKQELTLEGIKQFYIAVEKEEWKLDTLSDLYETVTITQAVIFCNTRRKVDWLTDKLTARDFTVSAMHGDMEQSQRDVIMKEFRSGSSRVLIATDLLARGIDVQQVSLVINYDLPANRENYIHRIGRGGRFGRKGVAINFVTADDVRMMREIEQFYSTQIEEMPMNVADLI.

The disordered stretch occupies residues 1–26 (MSNDKGLEEIPEDQSTTPHKPTSNVG). The segment covering 13 to 26 (DQSTTPHKPTSNVG) has biased composition (polar residues). A Q motif motif is present at residues 48-76 (DSFDAMELKPELLRGVYAYGFERPSAIQQ). The Helicase ATP-binding domain occupies 79 to 249 (IKPIIKGSDV…TKFMRDPVRI (171 aa)). Residue 92–99 (AQSGTGKT) participates in ATP binding. The short motif at 197 to 200 (DEAD) is the DEAD box element. Positions 260–421 (GIKQFYIAVE…EMPMNVADLI (162 aa)) constitute a Helicase C-terminal domain.

This sequence belongs to the DEAD box helicase family. eIF4A subfamily. As to quaternary structure, component of the eIF4F complex, which composition varies with external and internal environmental conditions. It is composed of at least eIF4A, eIF4E and eIF4G.

The protein localises to the cytoplasm. It carries out the reaction ATP + H2O = ADP + phosphate + H(+). Its function is as follows. ATP-dependent RNA helicase which is a subunit of the eIF4F complex involved in cap recognition and is required for mRNA binding to ribosome. In the current model of translation initiation, eIF4A unwinds RNA secondary structures in the 5'-UTR of mRNAs which is necessary to allow efficient binding of the small ribosomal subunit, and subsequent scanning for the initiator codon. The sequence is that of ATP-dependent RNA helicase eIF4A (tif1) from Aspergillus oryzae (strain ATCC 42149 / RIB 40) (Yellow koji mold).